The sequence spans 327 residues: Glycerol-3-phosphate dehydrogenase [NAD(P)+] (327 aa).

NADPH contacts are provided by Ser-10, Phe-11, Arg-31, and Lys-108. The sn-glycerol 3-phosphate site is built by Lys-108, Gly-136, and Ser-138. An NADPH-binding site is contributed by Ala-140. Positions 191, 246, 256, 257, and 258 each coordinate sn-glycerol 3-phosphate. The Proton acceptor role is filled by Lys-191. Arg-257 is an NADPH binding site. NADPH contacts are provided by Leu-281 and Glu-283.

The protein belongs to the NAD-dependent glycerol-3-phosphate dehydrogenase family.

It is found in the cytoplasm. It carries out the reaction sn-glycerol 3-phosphate + NAD(+) = dihydroxyacetone phosphate + NADH + H(+). The catalysed reaction is sn-glycerol 3-phosphate + NADP(+) = dihydroxyacetone phosphate + NADPH + H(+). Its pathway is membrane lipid metabolism; glycerophospholipid metabolism. Its function is as follows. Catalyzes the reduction of the glycolytic intermediate dihydroxyacetone phosphate (DHAP) to sn-glycerol 3-phosphate (G3P), the key precursor for phospholipid synthesis. This is Glycerol-3-phosphate dehydrogenase [NAD(P)+] from Ehrlichia ruminantium (strain Welgevonden).